The sequence spans 373 residues: MSLRRHIGNPEYLMKRIPQNPRYQHIKSRLDTGNSMTKYTEKLEEIKKNYRYKKDELFKRLKVTTFAQLIIQVASLSDQTLEVTAEEIQRLEDNDSAASDPDAETTARTNGKGNPGEQSPSPEQFINNAGAGDSSRSTLQSVISGVGELDLDKGPVKKAEPHTKDKPYPDCPFLLLDVRDRDSYQQCHIVGAYSYPIATLSRTMNPYSNDILEYKNAHGKIIILYDDDERLASQAATTMCERGFENLFMLSGGLKVLAQKFPEGLITGSLPASCQQALPPGSARKRSSPKGPPLPAENKWRFTPEDLKKIEYYLEEEQGPADHPSRLNQANSSGRESKVPGARSAQNLPGGGPASHSNPRSLSSGHLQGKPWK.

Positions 89–137 are disordered; sequence QRLEDNDSAASDPDAETTARTNGKGNPGEQSPSPEQFINNAGAGDSSRS. Ser96 and Ser99 each carry phosphoserine. The segment covering 106 to 127 has biased composition (polar residues); sequence TARTNGKGNPGEQSPSPEQFIN. Position 109 is a phosphothreonine (Thr109). Ser121 bears the Phosphoserine mark. Residues 169 to 266 enclose the Rhodanese domain; it reads PDCPFLLLDV…LAQKFPEGLI (98 aa). Positions 275–373 are disordered; that stretch reads QQALPPGSAR…SGHLQGKPWK (99 aa). Residues 298-312 are compositionally biased toward basic and acidic residues; sequence NKWRFTPEDLKKIEY. Arg343 carries the omega-N-methylarginine modification. The span at 355 to 366 shows a compositional bias: polar residues; that stretch reads SHSNPRSLSSGH.

This sequence belongs to the CEP41 family. Found in a complex with TTLL6. As to expression, expressed in testis and fetal tissues.

It is found in the cytoplasm. It localises to the cytoskeleton. Its subcellular location is the microtubule organizing center. The protein resides in the centrosome. The protein localises to the cell projection. It is found in the cilium. It localises to the cilium basal body. Functionally, required during ciliogenesis for tubulin glutamylation in cilium. Probably acts by participating in the transport of TTLL6, a tubulin polyglutamylase, between the basal body and the cilium. The polypeptide is Centrosomal protein of 41 kDa (CEP41) (Homo sapiens (Human)).